The sequence spans 367 residues: MTSRNYLLLTPGPLTTSRTVKEAMLFDSCTWDDDYNIGVVEQIRQQLTELATASEGYTSVLLQGSGSYAVEAVLGSALGPQDKVLIVSNGAYGARMVEMAGLMGIAHHAYDCGEVARPDVQAIDAILNADPTISHIAMVHSETTTGMLNPIDEVGALAHRYGKTYIVDAMSSFGGIPMDIAALHIDYLISSANKCIQGVPGFAFVIAREQKLAACKGRSRSLSLDLYAQWRCMEDNHGKWRFTSPTHTVLAFAQALKELAKEGGVAARHQRYQQNQRSLVAGMRALGFNTLLDDELHSPIITAFYSPEDPQYRFSEFYRRLKEQGFVIYPGKVSQSDCFRIGNIGEVYAADITALLTAIRTAMYWTK.

At Lys194 the chain carries N6-(pyridoxal phosphate)lysine.

It belongs to the class-V pyridoxal-phosphate-dependent aminotransferase family. PhnW subfamily. Homodimer. Pyridoxal 5'-phosphate serves as cofactor.

It catalyses the reaction (2-aminoethyl)phosphonate + pyruvate = phosphonoacetaldehyde + L-alanine. In terms of biological role, involved in phosphonate degradation. The polypeptide is 2-aminoethylphosphonate--pyruvate transaminase (Salmonella paratyphi B (strain ATCC BAA-1250 / SPB7)).